We begin with the raw amino-acid sequence, 561 residues long: DNA ligase B (561 aa).

The active-site N6-AMP-lysine intermediate is Lys-125.

Belongs to the NAD-dependent DNA ligase family. LigB subfamily.

It carries out the reaction NAD(+) + (deoxyribonucleotide)n-3'-hydroxyl + 5'-phospho-(deoxyribonucleotide)m = (deoxyribonucleotide)n+m + AMP + beta-nicotinamide D-nucleotide.. Its function is as follows. Catalyzes the formation of phosphodiester linkages between 5'-phosphoryl and 3'-hydroxyl groups in double-stranded DNA using NAD as a coenzyme and as the energy source for the reaction. This is DNA ligase B from Salmonella schwarzengrund (strain CVM19633).